The following is a 249-amino-acid chain: Ditrans,polycis-undecaprenyl-diphosphate synthase ((2E,6E)-farnesyl-diphosphate specific) (249 aa).

Asp18 is an active-site residue. Mg(2+) is bound at residue Asp18. Substrate is bound by residues 19–22, Phe23, Lys31, His35, and 63–65; these read GNNR and SSE. Residue Asn66 is the Proton acceptor of the active site. Substrate-binding positions include Trp67, Arg69, Arg186, and 192–194; that span reads RLS. Glu205 provides a ligand contact to Mg(2+).

This sequence belongs to the UPP synthase family. Homodimer. It depends on Mg(2+) as a cofactor.

It catalyses the reaction 8 isopentenyl diphosphate + (2E,6E)-farnesyl diphosphate = di-trans,octa-cis-undecaprenyl diphosphate + 8 diphosphate. Its function is as follows. Catalyzes the sequential condensation of isopentenyl diphosphate (IPP) with (2E,6E)-farnesyl diphosphate (E,E-FPP) to yield (2Z,6Z,10Z,14Z,18Z,22Z,26Z,30Z,34E,38E)-undecaprenyl diphosphate (di-trans,octa-cis-UPP). UPP is the precursor of glycosyl carrier lipid in the biosynthesis of bacterial cell wall polysaccharide components such as peptidoglycan and lipopolysaccharide. This is Ditrans,polycis-undecaprenyl-diphosphate synthase ((2E,6E)-farnesyl-diphosphate specific) from Acinetobacter baylyi (strain ATCC 33305 / BD413 / ADP1).